The chain runs to 431 residues: Gamma-glutamyl phosphate reductase (431 aa).

This sequence belongs to the gamma-glutamyl phosphate reductase family.

It localises to the cytoplasm. It catalyses the reaction L-glutamate 5-semialdehyde + phosphate + NADP(+) = L-glutamyl 5-phosphate + NADPH + H(+). The protein operates within amino-acid biosynthesis; L-proline biosynthesis; L-glutamate 5-semialdehyde from L-glutamate: step 2/2. Catalyzes the NADPH-dependent reduction of L-glutamate 5-phosphate into L-glutamate 5-semialdehyde and phosphate. The product spontaneously undergoes cyclization to form 1-pyrroline-5-carboxylate. The sequence is that of Gamma-glutamyl phosphate reductase from Methylobacterium nodulans (strain LMG 21967 / CNCM I-2342 / ORS 2060).